We begin with the raw amino-acid sequence, 468 residues long: Cyclin-dependent kinase 14 (468 aa).

Serine 24, serine 77, and serine 94 each carry phosphoserine. The segment at 102–131 is disordered; that stretch reads FKSSSAGKESPKVRRHSSPSSPTSPKFGKA. Serine 133 bears the Phosphoserine mark. Positions 134-418 constitute a Protein kinase domain; sequence YEKLEKLGEG…AQAALSHEYF (285 aa). ATP-binding positions include 140 to 148 and lysine 163; that span reads LGEGSYATV. The active-site Proton acceptor is aspartate 255. A disordered region spans residues 448 to 468; that stretch reads ESMRAFGKNSSYGKSLSNSKH. The span at 455–468 shows a compositional bias: polar residues; the sequence is KNSSYGKSLSNSKH.

The protein belongs to the protein kinase superfamily. CMGC Ser/Thr protein kinase family. CDC2/CDKX subfamily. In terms of assembly, found in a complex with LRP6, CCNY and CAPRIN2 during G2/M stage; CAPRIN2 functions as a scaffold for the complex by binding to CCNY via its N terminus and to CDK14 via its C terminus. Interacts with CCNY; CCNY mediates its recruitment to the plasma membrane and promotes phosphorylation of LRP6. Interacts with CCDN3 and CDKN1A. Interacts with SEPT8. Interacts with 14-3-3 proteina YWHAB, YWHAE, YWHAH and YWHAQ.

It localises to the cell membrane. It is found in the cytoplasm. The protein localises to the nucleus. It catalyses the reaction L-seryl-[protein] + ATP = O-phospho-L-seryl-[protein] + ADP + H(+). It carries out the reaction L-threonyl-[protein] + ATP = O-phospho-L-threonyl-[protein] + ADP + H(+). Serine/threonine-protein kinase activity is promoted by associated cyclins CCDN3 and CCNY and repressed by CDKN1A. Functionally, serine/threonine-protein kinase involved in the control of the eukaryotic cell cycle, whose activity is controlled by an associated cyclin. Acts as a cell-cycle regulator of Wnt signaling pathway during G2/M phase by mediating the phosphorylation of LRP6 at 'Ser-1490', leading to the activation of the Wnt signaling pathway. Acts as a regulator of cell cycle progression and cell proliferation via its interaction with CCDN3. Phosphorylates RB1 in vitro, however the relevance of such result remains to be confirmed in vivo. May also play a role in meiosis, neuron differentiation and may indirectly act as a negative regulator of insulin-responsive glucose transport. The protein is Cyclin-dependent kinase 14 (CDK14) of Oryctolagus cuniculus (Rabbit).